Reading from the N-terminus, the 173-residue chain is Crossover junction endodeoxyribonuclease RuvC (173 aa).

Active-site residues include Asp-11, Glu-71, and Asp-143. Residues Asp-11, Glu-71, and Asp-143 each coordinate Mg(2+).

This sequence belongs to the RuvC family. In terms of assembly, homodimer which binds Holliday junction (HJ) DNA. The HJ becomes 2-fold symmetrical on binding to RuvC with unstacked arms; it has a different conformation from HJ DNA in complex with RuvA. In the full resolvosome a probable DNA-RuvA(4)-RuvB(12)-RuvC(2) complex forms which resolves the HJ. Mg(2+) is required as a cofactor.

The protein localises to the cytoplasm. It carries out the reaction Endonucleolytic cleavage at a junction such as a reciprocal single-stranded crossover between two homologous DNA duplexes (Holliday junction).. In terms of biological role, the RuvA-RuvB-RuvC complex processes Holliday junction (HJ) DNA during genetic recombination and DNA repair. Endonuclease that resolves HJ intermediates. Cleaves cruciform DNA by making single-stranded nicks across the HJ at symmetrical positions within the homologous arms, yielding a 5'-phosphate and a 3'-hydroxyl group; requires a central core of homology in the junction. The consensus cleavage sequence is 5'-(A/T)TT(C/G)-3'. Cleavage occurs on the 3'-side of the TT dinucleotide at the point of strand exchange. HJ branch migration catalyzed by RuvA-RuvB allows RuvC to scan DNA until it finds its consensus sequence, where it cleaves and resolves the cruciform DNA. The sequence is that of Crossover junction endodeoxyribonuclease RuvC from Brucella suis (strain ATCC 23445 / NCTC 10510).